The following is a 117-amino-acid chain: Hydrogenase maturation factor HypA (117 aa).

His-2 provides a ligand contact to Ni(2+). Residues Cys-73, Cys-76, Cys-89, and Cys-92 each contribute to the Zn(2+) site.

It belongs to the HypA/HybF family.

Functionally, involved in the maturation of [NiFe] hydrogenases. Required for nickel insertion into the metal center of the hydrogenase. This chain is Hydrogenase maturation factor HypA, found in Shewanella baltica (strain OS185).